The sequence spans 246 residues: 3-deoxy-manno-octulosonate cytidylyltransferase (246 aa).

The protein belongs to the KdsB family.

Its subcellular location is the cytoplasm. It catalyses the reaction 3-deoxy-alpha-D-manno-oct-2-ulosonate + CTP = CMP-3-deoxy-beta-D-manno-octulosonate + diphosphate. The protein operates within nucleotide-sugar biosynthesis; CMP-3-deoxy-D-manno-octulosonate biosynthesis; CMP-3-deoxy-D-manno-octulosonate from 3-deoxy-D-manno-octulosonate and CTP: step 1/1. It participates in bacterial outer membrane biogenesis; lipopolysaccharide biosynthesis. Functionally, activates KDO (a required 8-carbon sugar) for incorporation into bacterial lipopolysaccharide in Gram-negative bacteria. The protein is 3-deoxy-manno-octulosonate cytidylyltransferase of Paramagnetospirillum magneticum (strain ATCC 700264 / AMB-1) (Magnetospirillum magneticum).